The primary structure comprises 668 residues: tRNA 5-methylaminomethyl-2-thiouridine biosynthesis bifunctional protein MnmC (668 aa).

The interval 1–245 (MKHYSIQPAN…KREMLCGVME (245 aa)) is tRNA (mnm(5)s(2)U34)-methyltransferase. The interval 270–668 (IGGGIASALL…LLKGKAVKAG (399 aa)) is FAD-dependent cmnm(5)s(2)U34 oxidoreductase.

In the N-terminal section; belongs to the methyltransferase superfamily. tRNA (mnm(5)s(2)U34)-methyltransferase family. The protein in the C-terminal section; belongs to the DAO family. The cofactor is FAD.

It is found in the cytoplasm. It carries out the reaction 5-aminomethyl-2-thiouridine(34) in tRNA + S-adenosyl-L-methionine = 5-methylaminomethyl-2-thiouridine(34) in tRNA + S-adenosyl-L-homocysteine + H(+). Its function is as follows. Catalyzes the last two steps in the biosynthesis of 5-methylaminomethyl-2-thiouridine (mnm(5)s(2)U) at the wobble position (U34) in tRNA. Catalyzes the FAD-dependent demodification of cmnm(5)s(2)U34 to nm(5)s(2)U34, followed by the transfer of a methyl group from S-adenosyl-L-methionine to nm(5)s(2)U34, to form mnm(5)s(2)U34. The protein is tRNA 5-methylaminomethyl-2-thiouridine biosynthesis bifunctional protein MnmC of Shigella dysenteriae serotype 1 (strain Sd197).